The primary structure comprises 485 residues: ATP synthase subunit beta (485 aa).

Positions 1-11 are enriched in basic and acidic residues; sequence MPATETADKNT. The tract at residues 1–20 is disordered; sequence MPATETADKNTKSANSDTSG. 170–177 contacts ATP; that stretch reads GGAGVGKT.

The protein belongs to the ATPase alpha/beta chains family. F-type ATPases have 2 components, CF(1) - the catalytic core - and CF(0) - the membrane proton channel. CF(1) has five subunits: alpha(3), beta(3), gamma(1), delta(1), epsilon(1). CF(0) has three main subunits: a(1), b(2) and c(9-12). The alpha and beta chains form an alternating ring which encloses part of the gamma chain. CF(1) is attached to CF(0) by a central stalk formed by the gamma and epsilon chains, while a peripheral stalk is formed by the delta and b chains.

The protein localises to the cell membrane. It carries out the reaction ATP + H2O + 4 H(+)(in) = ADP + phosphate + 5 H(+)(out). Functionally, produces ATP from ADP in the presence of a proton gradient across the membrane. The catalytic sites are hosted primarily by the beta subunits. The chain is ATP synthase subunit beta from Mycolicibacterium paratuberculosis (strain ATCC BAA-968 / K-10) (Mycobacterium paratuberculosis).